A 475-amino-acid chain; its full sequence is Vitronectin (475 aa).

The signal sequence occupies residues 1–19; that stretch reads MAPLRPIFTLALLLWVVLA. In terms of domain architecture, SMB spans 20-63; that stretch reads DQESCKDRCTEGFNANRKCQCDELCSYYQSCCADYAAECKPQVT. Intrachain disulfides connect Cys-24–Cys-28, Cys-24–Cys-40, Cys-28–Cys-58, Cys-38–Cys-40, Cys-38–Cys-51, Cys-44–Cys-50, and Cys-51–Cys-58. Residues 64–66 carry the Cell attachment site motif; that stretch reads RGD. A Phosphothreonine modification is found at Thr-69. 3 positions are modified to sulfotyrosine: Tyr-75, Tyr-78, and Tyr-80. A glycan (N-linked (GlcNAc...) asparagine) is linked at Asn-87. A disordered region spans residues 87–123; it reads NASVHAQPESPTVGQEPTLSPDLQTEGGAEPTHEVPL. Residues 95-109 are compositionally biased toward polar residues; it reads ESPTVGQEPTLSPDL. Hemopexin repeat units lie at residues 158 to 202, 203 to 250, and 251 to 305; these read GKPF…VWGI, EGPI…FSGI, and PDNV…FEHF. 2 N-linked (GlcNAc...) asparagine glycosylation sites follow: Asn-169 and Asn-242. Sulfotyrosine is present on residues Tyr-279 and Tyr-282. Ser-312 is modified (phosphoserine). A disordered region spans residues 359–391; that stretch reads LTPSPSAKKQKSRRRSRKRYRSRYGRGRSQNSR. Over residues 366 to 384 the composition is skewed to basic residues; the sequence is KKQKSRRRSRKRYRSRYGR. Residues 366-392 form a glycosaminoglycan binding region region; that stretch reads KKQKSRRRSRKRYRSRYGRGRSQNSRR. Ser-394 bears the Phosphoserine mark. One copy of the Hemopexin 4 repeat lies at 419–469; the sequence is TSWLKPATSEPIQSVYFFSGDKYYRVNLRTQRVDTVNPPYPRSIAQYWLGC.

As to quaternary structure, interacts with SERPINE1/PAI1 and C1QBP. Monomer. Post-translationally, sulfated on tyrosine residues. N- and O-glycosylated. In terms of processing, it has been suggested that the active SMB domain may be permitted considerable disulfide bond heterogeneity or variability, thus two alternate disulfide patterns based on 3D structures are described with 1 disulfide bond conserved in both. In terms of tissue distribution, plasma.

The protein localises to the secreted. It is found in the extracellular space. Its function is as follows. Vitronectin is a cell adhesion and spreading factor found in serum and tissues. Vitronectin interact with glycosaminoglycans and proteoglycans. Is recognized by certain members of the integrin family and serves as a cell-to-substrate adhesion molecule. Inhibitor of the membrane-damaging effect of the terminal cytolytic complement pathway. The chain is Vitronectin (VTN) from Oryctolagus cuniculus (Rabbit).